The sequence spans 372 residues: MNPGIDLEQRFVETLMELGLTPGVAKTIWLPIPMLLMIIGATVGVLVSVWLERKISAAAQQRIGPEYIGPLGILAPVADGIKLVFKEDIVPANTDPWLFTLGPILVVIPVFFSYLIVPFGQNILITDLGIGIFFWIALSSIAPIGLLMAGYSSNNKYSLLGGLRAAAQSISYEIPLALAVLAVVMMSNSLSTIDIVNQQSGYGILGWNVIRQPIGFMLFWIAALAECERLPFDLPEAEEELVAGYQTEYAGMKFALFYLGSYVNLVLSSILVAVLYFGGWDLPIPATMIADWINVDPNNAIFELVTAGLGLVMTLLKAYFFLFLAILLRWTVPRVRIDQLLDFGWKFLLPVGLVNLLLTAGLKLAFPFAFGG.

Transmembrane regions (helical) follow at residues 27–47 (TIWLPIPMLLMIIGATVGVLV), 65–85 (PEYIGPLGILAPVADGIKLVF), 97–117 (WLFTLGPILVVIPVFFSYLIV), 128–148 (LGIGIFFWIALSSIAPIGLLM), 176–196 (LALAVLAVVMMSNSLSTIDIV), 204–224 (ILGWNVIRQPIGFMLFWIAAL), 249–269 (YAGMKFALFYLGSYVNLVLSS), 308–328 (GLGLVMTLLKAYFFLFLAILL), and 351–371 (VGLVNLLLTAGLKLAFPFAFG).

It belongs to the complex I subunit 1 family. As to quaternary structure, NDH-1 is composed of at least 11 different subunits.

It localises to the cellular thylakoid membrane. The enzyme catalyses a plastoquinone + NADH + (n+1) H(+)(in) = a plastoquinol + NAD(+) + n H(+)(out). It carries out the reaction a plastoquinone + NADPH + (n+1) H(+)(in) = a plastoquinol + NADP(+) + n H(+)(out). In terms of biological role, NDH-1 shuttles electrons from an unknown electron donor, via FMN and iron-sulfur (Fe-S) centers, to quinones in the respiratory and/or the photosynthetic chain. The immediate electron acceptor for the enzyme in this species is believed to be plastoquinone. Couples the redox reaction to proton translocation, and thus conserves the redox energy in a proton gradient. This Acaryochloris marina (strain MBIC 11017) protein is NAD(P)H-quinone oxidoreductase subunit 1.